Consider the following 228-residue polypeptide: L-ribulose-5-phosphate 4-epimerase UlaF (228 aa).

Substrate is bound by residues 26-27, 43-44, and 72-73; these read GN, SG, and SS. Residues D74, H93, and H95 each contribute to the Zn(2+) site. The active-site Proton donor/acceptor is D118. H167 contacts Zn(2+). The Proton donor/acceptor role is filled by Y225.

It belongs to the aldolase class II family. AraD/FucA subfamily. It depends on Zn(2+) as a cofactor.

It catalyses the reaction L-ribulose 5-phosphate = D-xylulose 5-phosphate. It functions in the pathway cofactor degradation; L-ascorbate degradation; D-xylulose 5-phosphate from L-ascorbate: step 4/4. In terms of biological role, catalyzes the isomerization of L-ribulose 5-phosphate to D-xylulose 5-phosphate. Is involved in the anaerobic L-ascorbate utilization. The chain is L-ribulose-5-phosphate 4-epimerase UlaF from Escherichia coli O139:H28 (strain E24377A / ETEC).